The sequence spans 483 residues: Triacylglycerol lipase ptl3 (483 aa).

The 200-residue stretch at 141–340 (LILSGGGTFG…DNDIPHAKLT (200 aa)) folds into the PNPLA domain. The GXGXXG signature appears at 145-150 (GGGTFG). The GXSXG signature appears at 172 to 176 (GSSAG). The active-site Nucleophile is the S174. The active-site Proton acceptor is D327.

It is found in the cytoplasm. It localises to the lipid droplet. The catalysed reaction is a triacylglycerol + H2O = a diacylglycerol + a fatty acid + H(+). In terms of biological role, lipid particle-localized triacylglycerol (TAG) lipase. The lipid droplet/particle is a lipid storage compartment which serves as a depot of energy and building blocks for membrane lipid biosynthesis. Involved in the mobilization of the non-polar storage lipids triacylglycerols (TAGs) from lipid particles by hydrolysis of TAGs, releasing and supplying specific fatty acids to the appropriate metabolic pathways. This Schizosaccharomyces pombe (strain 972 / ATCC 24843) (Fission yeast) protein is Triacylglycerol lipase ptl3 (ptl3).